The sequence spans 194 residues: 3-isopropylmalate dehydratase small subunit (194 aa).

The protein belongs to the LeuD family. LeuD type 1 subfamily. As to quaternary structure, heterodimer of LeuC and LeuD.

The catalysed reaction is (2R,3S)-3-isopropylmalate = (2S)-2-isopropylmalate. It participates in amino-acid biosynthesis; L-leucine biosynthesis; L-leucine from 3-methyl-2-oxobutanoate: step 2/4. Functionally, catalyzes the isomerization between 2-isopropylmalate and 3-isopropylmalate, via the formation of 2-isopropylmaleate. The polypeptide is 3-isopropylmalate dehydratase small subunit (Anoxybacillus flavithermus (strain DSM 21510 / WK1)).